A 48-amino-acid polypeptide reads, in one-letter code: Cytochrome b559 subunit beta (48 aa).

The chain crosses the membrane as a helical span at residues 23 to 39 (WLAVHALAIPSVFFLGS). Residue H27 participates in heme binding.

Belongs to the PsbE/PsbF family. As to quaternary structure, heterodimer of an alpha subunit and a beta subunit. PSII is composed of 1 copy each of membrane proteins PsbA, PsbB, PsbC, PsbD, PsbE, PsbF, PsbH, PsbI, PsbJ, PsbK, PsbL, PsbM, PsbT, PsbX, PsbY, Psb30/Ycf12, peripheral proteins PsbO, CyanoQ (PsbQ), PsbU, PsbV and a large number of cofactors. It forms dimeric complexes. The cofactor is heme b.

The protein resides in the cellular thylakoid membrane. In terms of biological role, this b-type cytochrome is tightly associated with the reaction center of photosystem II (PSII). PSII is a light-driven water:plastoquinone oxidoreductase that uses light energy to abstract electrons from H(2)O, generating O(2) and a proton gradient subsequently used for ATP formation. It consists of a core antenna complex that captures photons, and an electron transfer chain that converts photonic excitation into a charge separation. The polypeptide is Cytochrome b559 subunit beta (Prochlorococcus marinus (strain MIT 9301)).